The chain runs to 489 residues: UDP-N-acetylmuramoylalanine--D-glutamate ligase (489 aa).

Residue 126–132 participates in ATP binding; sequence GTNGKTT.

It belongs to the MurCDEF family.

It is found in the cytoplasm. The catalysed reaction is UDP-N-acetyl-alpha-D-muramoyl-L-alanine + D-glutamate + ATP = UDP-N-acetyl-alpha-D-muramoyl-L-alanyl-D-glutamate + ADP + phosphate + H(+). It functions in the pathway cell wall biogenesis; peptidoglycan biosynthesis. In terms of biological role, cell wall formation. Catalyzes the addition of glutamate to the nucleotide precursor UDP-N-acetylmuramoyl-L-alanine (UMA). This chain is UDP-N-acetylmuramoylalanine--D-glutamate ligase, found in Mycobacterium avium (strain 104).